Here is a 432-residue protein sequence, read N- to C-terminus: MQVSVETTQGLGRRVTITIAADSIENAVKSELVNVAKKVRIDGFRKGKVPMNVVAQRYGASVRQDVLGDLMSRHFVDAIIKEKINPAGAPNYVPGEYKLGEDFTYAVEFEVYPEVELKGLESIEVEKPVVEVTDADVDTMLDTLRKQQATWKDKDGAADAEDRVTIDFTGSVDGEEFEGGKATDFVLAMGQGRMIPGFEEGIKGHKAGEEFTIDVTFPEEYHAENLKGKAAKFVINLKKVEERELPELTEEFIKRFGVEDGSVAGLRAEVRKNMERELKGAVRNRIKSQAIEGLVNANNIDVPAALIDGEIDVLRRQAAQRFGGNEKQALELPRELFEEQAKRRVVVGLLLGEVIRTHELKADEDRVKALIEEMASAYEDPSEVIEFYSKNNELMDNMRNVALEEQAVEAVLAKAKVTEKPTSFNELMNQQA.

The PPIase FKBP-type domain maps to 161-246 (EDRVTIDFTG…LKKVEERELP (86 aa)).

Belongs to the FKBP-type PPIase family. Tig subfamily.

It is found in the cytoplasm. It catalyses the reaction [protein]-peptidylproline (omega=180) = [protein]-peptidylproline (omega=0). Functionally, involved in protein export. Acts as a chaperone by maintaining the newly synthesized protein in an open conformation. Functions as a peptidyl-prolyl cis-trans isomerase. This chain is Trigger factor, found in Cronobacter sakazakii (strain ATCC BAA-894) (Enterobacter sakazakii).